The following is a 437-amino-acid chain: Trigger factor (437 aa).

Residues 161 to 246 (DDQVNIDFVG…VNSVSAPVLP (86 aa)) enclose the PPIase FKBP-type domain.

Belongs to the FKBP-type PPIase family. Tig subfamily.

Its subcellular location is the cytoplasm. The enzyme catalyses [protein]-peptidylproline (omega=180) = [protein]-peptidylproline (omega=0). Functionally, involved in protein export. Acts as a chaperone by maintaining the newly synthesized protein in an open conformation. Functions as a peptidyl-prolyl cis-trans isomerase. The polypeptide is Trigger factor (Pseudomonas putida (strain GB-1)).